A 75-amino-acid chain; its full sequence is Small ribosomal subunit protein bS18 (75 aa).

Belongs to the bacterial ribosomal protein bS18 family. In terms of assembly, part of the 30S ribosomal subunit. Forms a tight heterodimer with protein bS6.

In terms of biological role, binds as a heterodimer with protein bS6 to the central domain of the 16S rRNA, where it helps stabilize the platform of the 30S subunit. This chain is Small ribosomal subunit protein bS18, found in Shewanella amazonensis (strain ATCC BAA-1098 / SB2B).